A 316-amino-acid polypeptide reads, in one-letter code: IDS-like terpene synthase 2 (316 aa).

2 residues coordinate Mg(2+): D69 and D73.

Belongs to the FPP/GGPP synthase family. Requires Mg(2+) as cofactor.

The enzyme catalyses (2E)-geranyl diphosphate + H2O = linalool + diphosphate. The catalysed reaction is (2E,6E)-farnesyl diphosphate + H2O = (6E)-nerolidol + diphosphate. Its function is as follows. Terpene synthase that shows monoterpene synthase activity and produces linalool, using geranyl diphosphate (GPP) as substrate. Also shows sesquiterpene synthase activity as it is able to convert farnesyl diphosphate (FPP) into (E)-nerolidol. This chain is IDS-like terpene synthase 2, found in Melampsora larici-populina (strain 98AG31 / pathotype 3-4-7) (Poplar leaf rust fungus).